The following is a 273-amino-acid chain: F-actin-capping protein subunit alpha (273 aa).

The protein belongs to the F-actin-capping protein alpha subunit family. In terms of assembly, heterodimer of an alpha and a beta subunit.

It localises to the cytoplasm. Its subcellular location is the cytoskeleton. F-actin-capping proteins bind in a Ca(2+)-independent manner to the fast growing ends of actin filaments (barbed end) thereby blocking the exchange of subunits at these ends. Unlike other capping proteins (such as gelsolin and severin), these proteins do not sever actin filaments. This chain is F-actin-capping protein subunit alpha (cap1), found in Emericella nidulans (strain FGSC A4 / ATCC 38163 / CBS 112.46 / NRRL 194 / M139) (Aspergillus nidulans).